The following is a 166-amino-acid chain: NAD(P)H-quinone oxidoreductase subunit I, chloroplastic (166 aa).

2 consecutive 4Fe-4S ferredoxin-type domains span residues 55–84 (GRIH…VDWK) and 95–124 (LNYS…MTEE). Positions 64, 67, 70, 74, 104, 107, 110, and 114 each coordinate [4Fe-4S] cluster.

The protein belongs to the complex I 23 kDa subunit family. NDH is composed of at least 16 different subunits, 5 of which are encoded in the nucleus. [4Fe-4S] cluster is required as a cofactor.

The protein localises to the plastid. It localises to the chloroplast thylakoid membrane. It carries out the reaction a plastoquinone + NADH + (n+1) H(+)(in) = a plastoquinol + NAD(+) + n H(+)(out). It catalyses the reaction a plastoquinone + NADPH + (n+1) H(+)(in) = a plastoquinol + NADP(+) + n H(+)(out). Its function is as follows. NDH shuttles electrons from NAD(P)H:plastoquinone, via FMN and iron-sulfur (Fe-S) centers, to quinones in the photosynthetic chain and possibly in a chloroplast respiratory chain. The immediate electron acceptor for the enzyme in this species is believed to be plastoquinone. Couples the redox reaction to proton translocation, and thus conserves the redox energy in a proton gradient. This is NAD(P)H-quinone oxidoreductase subunit I, chloroplastic from Raillardella argentea (Silky raillardella).